We begin with the raw amino-acid sequence, 86 residues long: UPF0473 protein Clos_1662 (86 aa).

This sequence belongs to the UPF0473 family.

This chain is UPF0473 protein Clos_1662, found in Alkaliphilus oremlandii (strain OhILAs) (Clostridium oremlandii (strain OhILAs)).